The following is a 70-amino-acid chain: Putative RNA-binding protein YbcJ (70 aa).

Residues 12–68 (VELCDLLKLEGWSESGAQAKIAIAEGQVKVDGAVETRKRCKIVAGQTVSFAGHSVQV) enclose the S4 RNA-binding domain.

In terms of assembly, in pull-down experiments interacts with CedA.

In terms of biological role, its structure and the presence of conserved basic residues indicates that it probably binds RNA. In Escherichia coli (strain K12), this protein is Putative RNA-binding protein YbcJ (ybcJ).